The primary structure comprises 1742 residues: MEGSGTENPCSTTVGWLQQDNDAKPWLWRFSNCFSRPQQTLPLSPQTKDYMENKKVAVELKDVPSPLHAGSKLFPAVPLPDIHSLQQPKVQLSTVPKVSCCAHCTNDPSTSPVRFGGGSGGGAGSLVPPGALLDSQSTRTITCQVGSGLAFQSAPPLQNASARNTLAGVASDFPSMCLESNLSSCKHLPCCGKLHFQSCRGNVHKLHQFPALQGCPSSAGYFPCSDFTSGAPGHVEEHVSQSELTPHLCTNSLHLNVVPPVCLKGSLYCEDCLSKPARNSIIDAAKVWPNIPPPNTQTAPVTVPLCNGCGTKGMGKETTLLLATSLGKAASKFGSPEVALAGQMLENLPPIGVFWDIENCSVPSGRSATAVVQRIREKFFKGHREAEFICVCDISKENKEVIQELNNCQVTVAHINATAKNAADDKLRQSLRRFANTHTAPATVVLVSTDVNFALELSDLRHRHGFHIILVHKNQASEALLHHANELIRFEEFISDLPPRLPLKMPCHTLLYVYNLPANKDGKSISNRLRRLSDNCGGKVLNITGCSAILRFINRDSAERALKRMENEDVFGNRIVVSFTPKSSELCETKSSNATADKVKSPKKLKNPKLCLIKDISESPSSAKAAPGKGSQANSGSATRNANVKSLQELCRLESKTGTRSSEPQQGHLRLGAPPHRSSSAAAPAPKAPGLAESVYKTNPKKESLGARSVTSSPVEKKEKEETLFQVSYPSAFSKLIASRQVSPLLTAQPWSSRNLSPNLLNRASPLAFNAAHSSVGADGPDPFAHGVDVQISNLDYRLSRKELQQLMQEAFSRHGKVKSVELSPHTDYQLKAVVQMENLQEAIGAVNSLHRYKIGSKKILVSLATGAANKSLSLLSAETMSILQDAPACCLPLFKFTDIYEKKFGHRLNVSDLYKLTDTVAIREQGNGRLVCLLPSSQARQSPLGSSQSHDGSSTNCSPIIFEELEYHEPVCRQHCPNKDFSEHEFDPDSYKIPFVILSLKTFAPQVHSLLQTHEGTVPLLSFPDCYAAEFGELEIVQENRGGGVPLEHLITCVPGVNIATAQNGVKVVKWIHNKPPPPNTDPWLLRSKSPVGNPQLIQFSREVIDLLKNQPSCVIPISNFIPSYHHHFAKQCRVSDYGYSKLIELLEAVPHVLQILGMGSKRLLTLTHRAQVKRFTQDLLKLLKSQASKQVIVKEFAQAYHWCFSKDWDVTEYGVCELIDIISEIPDTTICLSQQDSEAMICIPRRERTQDEIERTKQFSKDVVDLLRHQPHFRMPFNKFIPSYHHHFGRQCKLAYYGFTKLLELFEAIPDILQVLECGEEKILTLTEVERFKALAAQFVKLLRSQKDNCLMMTDLLKEYAKTFGYTFRLQDYDVSSVSALTQKLCHVVKVADMESGKQIQLINRKSLRALTAQLLVLLMSWEGTTHLSVDELKRHYESTHSTPLNPCEYGFMTLTELLKSLPYLVEDQVFTNDKTEECVKLTSLYLFAKNVRSLLHTYHYQQLFLHEFSMAYSKYVGETLQPKTYGFSSVEELLGAIPQVVWIKGHGHKRIVVLKNDMKSRVNSLGPSPASHETQPSAPERILEVPESPPASELRLGVGGDGPHPAEQELLRLTDDSPVDLLCAPVPSCLPSPQLRPDPVVLQAADLIWFEEHPQEPSEIMILNQEEKIEIPVPIRNENLPPDPSSPGVSAAVPAPPSPSSETPESLLSKDPTESPAKKQPKNRVKLAANFSFAPITKL.

The residue at position 65 (Ser-65) is a Phosphoserine. The 138-residue stretch at 351 to 488 (IGVFWDIENC…ALLHHANELI (138 aa)) folds into the NYN domain. 2 disordered regions span residues 620 to 642 (PSSA…TRNA) and 655 to 721 (SKTG…KEKE). Over residues 631–642 (SQANSGSATRNA) the composition is skewed to polar residues. The segment covering 673-689 (APPHRSSSAAAPAPKAP) has biased composition (low complexity). Tyr-696 bears the Phosphotyrosine mark. A Phosphoserine modification is found at Ser-757. The RRM domain occupies 788-867 (VDVQISNLDY…KKILVSLATG (80 aa)). HTH OST-type domains lie at 872–946 (SLSL…SPLG) and 1000–1077 (SLKT…HNKP). Residues Ser-1089 and Ser-1091 each carry the phosphoserine modification. HTH OST-type domains are found at residues 1097-1171 (QLIQ…LTHR), 1173-1247 (QVKR…CIPR), 1257-1332 (RTKQ…TEVE), 1333-1408 (RFKA…INRK), 1409-1484 (SLRA…CVKL), and 1486-1560 (SLYL…LKND). Ser-1571 bears the Phosphoserine mark. Residues 1678 to 1729 (IRNENLPPDPSSPGVSAAVPAPPSPSSETPESLLSKDPTESPAKKQPKNRVK) are disordered. Low complexity predominate over residues 1703 to 1712 (SSETPESLLS).

As to quaternary structure, interacts with LIMK2.

It localises to the peroxisome. Essential regulator of oogenesis required for female meiotic progression to repress transposable elements and preventing their mobilization, which is essential for the germline integrity. Probably acts via some RNA metabolic process, equivalent to the piRNA system in males, which mediates the repression of transposable elements during meiosis by forming complexes composed of RNAs and governs the methylation and subsequent repression of transposons. Also required to protect from DNA double-strand breaks. This is Meiosis regulator and mRNA stability factor 1 from Bos taurus (Bovine).